A 448-amino-acid polypeptide reads, in one-letter code: uncharacterized protein (448 aa).

The segment covering 187–198 has biased composition (basic and acidic residues); the sequence is SKGDRGDADDRG. 3 disordered regions span residues 187-221, 243-270, and 291-361; these read SKGDRGDADDRGPASVGSGGAPARGAGQQPELPTR, LQVPGGTSAAIPSASSTPSLPNLGGATM, and LSGL…LPNG. Residues 243–261 are compositionally biased toward low complexity; the sequence is LQVPGGTSAAIPSASSTPS. Positions 307–334 are enriched in basic and acidic residues; it reads FDERGQEVRDPADYEHANEPDERRADDR.

To M.tuberculosis Rv0025 and Rv0739.

This is an uncharacterized protein from Mycobacterium tuberculosis (strain CDC 1551 / Oshkosh).